The sequence spans 261 residues: Cytosolic Fe-S cluster assembly factor Nubp2 homolog (261 aa).

Position 14–21 (14–21 (GKGGVGKS)) interacts with ATP. Positions 188 and 191 each coordinate [4Fe-4S] cluster.

Belongs to the Mrp/NBP35 ATP-binding proteins family. NUBP2/CFD1 subfamily. In terms of assembly, heterotetramer of 2 Nubp1 and 2 Nubp2 chains. [4Fe-4S] cluster is required as a cofactor.

Its subcellular location is the cytoplasm. Its function is as follows. Component of the cytosolic iron-sulfur (Fe/S) protein assembly (CIA) machinery. Required for maturation of extramitochondrial Fe-S proteins. The Nubp1-Nubp2 heterotetramer forms a Fe-S scaffold complex, mediating the de novo assembly of an Fe-S cluster and its transfer to target apoproteins. The polypeptide is Cytosolic Fe-S cluster assembly factor Nubp2 homolog (Drosophila willistoni (Fruit fly)).